Consider the following 341-residue polypeptide: Holliday junction branch migration complex subunit RuvB (341 aa).

A large ATPase domain (RuvB-L) region spans residues 4 to 185 (TDRLIVPTAV…FGIVARLEFY (182 aa)). ATP is bound by residues Leu-24, Arg-25, Gly-66, Lys-69, Thr-70, Thr-71, 132–134 (EDF), Arg-175, Tyr-185, and Arg-222. Thr-70 lines the Mg(2+) pocket. The interval 186-256 (SAEELGYIVH…VADAALVMLD (71 aa)) is small ATPAse domain (RuvB-S). The head domain (RuvB-H) stretch occupies residues 259 to 341 (RAGLDVMDRK…ATPASDAELF (83 aa)). 3 residues coordinate DNA: Arg-295, Arg-314, and Arg-319.

The protein belongs to the RuvB family. In terms of assembly, homohexamer. Forms an RuvA(8)-RuvB(12)-Holliday junction (HJ) complex. HJ DNA is sandwiched between 2 RuvA tetramers; dsDNA enters through RuvA and exits via RuvB. An RuvB hexamer assembles on each DNA strand where it exits the tetramer. Each RuvB hexamer is contacted by two RuvA subunits (via domain III) on 2 adjacent RuvB subunits; this complex drives branch migration. In the full resolvosome a probable DNA-RuvA(4)-RuvB(12)-RuvC(2) complex forms which resolves the HJ.

It is found in the cytoplasm. It carries out the reaction ATP + H2O = ADP + phosphate + H(+). In terms of biological role, the RuvA-RuvB-RuvC complex processes Holliday junction (HJ) DNA during genetic recombination and DNA repair, while the RuvA-RuvB complex plays an important role in the rescue of blocked DNA replication forks via replication fork reversal (RFR). RuvA specifically binds to HJ cruciform DNA, conferring on it an open structure. The RuvB hexamer acts as an ATP-dependent pump, pulling dsDNA into and through the RuvAB complex. RuvB forms 2 homohexamers on either side of HJ DNA bound by 1 or 2 RuvA tetramers; 4 subunits per hexamer contact DNA at a time. Coordinated motions by a converter formed by DNA-disengaged RuvB subunits stimulates ATP hydrolysis and nucleotide exchange. Immobilization of the converter enables RuvB to convert the ATP-contained energy into a lever motion, pulling 2 nucleotides of DNA out of the RuvA tetramer per ATP hydrolyzed, thus driving DNA branch migration. The RuvB motors rotate together with the DNA substrate, which together with the progressing nucleotide cycle form the mechanistic basis for DNA recombination by continuous HJ branch migration. Branch migration allows RuvC to scan DNA until it finds its consensus sequence, where it cleaves and resolves cruciform DNA. This is Holliday junction branch migration complex subunit RuvB from Thiobacillus denitrificans (strain ATCC 25259 / T1).